The sequence spans 236 residues: Small ribosomal subunit protein uS3 (236 aa).

Residues 39 to 107 enclose the KH type-2 domain; the sequence is IRLYVLEELK…ETSLNIVEIH (69 aa).

Belongs to the universal ribosomal protein uS3 family. Part of the 30S ribosomal subunit. Forms a tight complex with proteins S10 and S14.

Functionally, binds the lower part of the 30S subunit head. Binds mRNA in the 70S ribosome, positioning it for translation. The protein is Small ribosomal subunit protein uS3 of Bartonella quintana (strain Toulouse) (Rochalimaea quintana).